The primary structure comprises 322 residues: Undecaprenyl-phosphate 4-deoxy-4-formamido-L-arabinose transferase (322 aa).

At 1 to 235 the chain is on the cytoplasmic side; that stretch reads MFEIHPVKKV…TCLTTTPLRM (235 aa). Residues 236 to 256 traverse the membrane as a helical segment; that stretch reads LSLLGSIIAIGGFSIAVLLVI. Residues 257–269 lie on the Periplasmic side of the membrane; it reads LRLTFGPQWAAEG. The helical transmembrane segment at 270 to 290 threads the bilayer; sequence VFMLFAVLFTFIGAQFIGMGL. At 291–322 the chain is on the cytoplasmic side; the sequence is LGEYIGRIYTDVRARPRYFVQQVIRPSSKENE.

Belongs to the glycosyltransferase 2 family.

Its subcellular location is the cell inner membrane. The catalysed reaction is UDP-4-deoxy-4-formamido-beta-L-arabinose + di-trans,octa-cis-undecaprenyl phosphate = 4-deoxy-4-formamido-alpha-L-arabinopyranosyl di-trans,octa-cis-undecaprenyl phosphate + UDP. Its pathway is glycolipid biosynthesis; 4-amino-4-deoxy-alpha-L-arabinose undecaprenyl phosphate biosynthesis; 4-amino-4-deoxy-alpha-L-arabinose undecaprenyl phosphate from UDP-4-deoxy-4-formamido-beta-L-arabinose and undecaprenyl phosphate: step 1/2. It functions in the pathway bacterial outer membrane biogenesis; lipopolysaccharide biosynthesis. In terms of biological role, catalyzes the transfer of 4-deoxy-4-formamido-L-arabinose from UDP to undecaprenyl phosphate. The modified arabinose is attached to lipid A and is required for resistance to polymyxin and cationic antimicrobial peptides. This chain is Undecaprenyl-phosphate 4-deoxy-4-formamido-L-arabinose transferase, found in Shigella flexneri.